Consider the following 513-residue polypeptide: ATP synthase subunit alpha (513 aa).

169-176 (GDRQTGKT) is an ATP binding site.

Belongs to the ATPase alpha/beta chains family. As to quaternary structure, F-type ATPases have 2 components, CF(1) - the catalytic core - and CF(0) - the membrane proton channel. CF(1) has five subunits: alpha(3), beta(3), gamma(1), delta(1), epsilon(1). CF(0) has three main subunits: a(1), b(2) and c(9-12). The alpha and beta chains form an alternating ring which encloses part of the gamma chain. CF(1) is attached to CF(0) by a central stalk formed by the gamma and epsilon chains, while a peripheral stalk is formed by the delta and b chains.

The protein resides in the cell inner membrane. The enzyme catalyses ATP + H2O + 4 H(+)(in) = ADP + phosphate + 5 H(+)(out). Produces ATP from ADP in the presence of a proton gradient across the membrane. The alpha chain is a regulatory subunit. The sequence is that of ATP synthase subunit alpha from Vibrio vulnificus (strain CMCP6).